Here is a 479-residue protein sequence, read N- to C-terminus: Ammonium transporter 3 member 2 (479 aa).

A run of 11 helical transmembrane segments spans residues 34 to 54 (VAATVVGLQSVPGLVVLYGGV), 59 to 79 (WAVNSAFMALYAFAAVWICWV), 139 to 159 (VVYFQCVFAAITLILVAGSLL), 164 to 184 (FLAWMIFVPLWLTFSYTVGAF), 202 to 222 (GGYVIHVSAGIAGFTAAYWVG), 237 to 257 (ILFTLTGAGLLWMGWAGFNGG), 272 to 292 (NTNICTAMSLIVWTCLDVIFF), 297 to 317 (VVGAVQGMITGLVCITPAAGV), 321 to 341 (WAALVMGVLAGSIPWYTMMIL), 355 to 375 (LGVFHTHGVAGLLGGLLTGLF), and 407 to 427 (IAGGLFVVAWNVAVTSLICLA).

It belongs to the ammonia transporter channel (TC 1.A.11.2) family.

It is found in the membrane. Functionally, involved in ammonium transport. This is Ammonium transporter 3 member 2 (AMT3-2) from Oryza sativa subsp. japonica (Rice).